The primary structure comprises 508 residues: Monocarboxylate transporter 9 (508 aa).

The Cytoplasmic segment spans residues 1–12; sequence MEFQKSPDGGWG. Transmembrane regions (helical) follow at residues 13–33, 53–73, 80–100, 102–122, 137–157, 164–184, 303–323, 341–361, 370–390, 396–416, 431–451, and 460–480; these read WVIVVVSFFTQFLSYGSPLAV, WVGSLASGVGLLASPVCSLFV, PVTIFSGFLVAGGLMLSSLAP, IYFLFFSYGIVVGLGCGLLYT, GLALGLISTGSSVGLFIYAAL, FYGLDGCLLIVGALALNILAC, VFSALFIAILLFDIGGFPPSL, MPLISIFGIMTAVGKLLLGIL, LYLYVATLIITGLALCAIPFA, LAILSGILGFLTGNWSIFPYV, GILMFFAGLGNSLGPPIVGWF, and IAFYFSGFCVLLGGFILLLAI. The Cytoplasmic portion of the chain corresponds to 481–508; it reads LPCWDMCNKKLPKPAVPTTFFYKVASNV.

The protein belongs to the major facilitator superfamily. Monocarboxylate porter (TC 2.A.1.13) family.

It localises to the cell membrane. The catalysed reaction is creatine(in) = creatine(out). It carries out the reaction (R)-carnitine(in) = (R)-carnitine(out). In terms of biological role, extracellular pH-and Na(+)-sensitive low-affinity creatine transporter. Also functions as a pH-independent carnitine efflux transporter. This chain is Monocarboxylate transporter 9 (Slc16a9), found in Mus musculus (Mouse).